The following is a 355-amino-acid chain: Cyanide hydratase (355 aa).

Residues Y6 to N286 form the CN hydrolase domain. E46 serves as the catalytic Proton acceptor. K128 is an active-site residue. The Nucleophile role is filled by C163.

It belongs to the carbon-nitrogen hydrolase superfamily. Nitrilase family. Oligomer of dimers, forming left-handed helical fibers.

It carries out the reaction formamide = hydrogen cyanide + H2O. In terms of biological role, catalyzes the hydration of cyanide to formamide. Degradation of cyanide may be important for plant pathogenic fungi in infection of cyanogenic plants. Also has low but significant nitrilase activity with acetonitrile, propionitrile and benzonitrile. This is Cyanide hydratase from Gibberella baccata (Fusarium lateritium).